We begin with the raw amino-acid sequence, 419 residues long: MLGIITFIIIFGILVIVHEFGHFYFAKKSGILVREFAIGMGPKIFSHVDQGGTLYTLRMLPLGGYVRMAGWGDDKTEIKTGTPASLTLNEQGFVKRINLSQSKLDPTSLPMHVTGYDLEDQLSITGLVLEETKTYKVAHDATIVEEDGTEIRIAPLDVQYQNASIGGRLITNFAGPMNNFILGIVVFILLVFLQGGMPDFSSNHVRVQENGAAAKAGLRDNDQIVAINGYKVTSWNDLTEAVDLATRDLGPSQTIKVTYKSHQRLKTVAVKPQKHAKTYTIGVKASLKTGFKDKLLGGLELAWSGAFTILNALKGLITGFSLNKLGGPVAMYDMSNQAAQNGLESVLSLMAMLSINLGIFNLIPIPALDGGKILMNIIEAIRRKPIKQETEAYITLAGVAIMVVLMIAVTWNDIMRVFF.

Histidine 18 is a binding site for Zn(2+). Glutamate 19 is an active-site residue. A Zn(2+)-binding site is contributed by histidine 22. The next 4 helical transmembrane spans lie at leucine 169–valine 191, leucine 301–asparagine 323, leucine 343–isoleucine 365, and alanine 392–tryptophan 411. In terms of domain architecture, PDZ spans glycine 175–lysine 274.

The protein belongs to the peptidase M50B family. Requires Zn(2+) as cofactor.

The protein resides in the cell membrane. This Streptococcus pyogenes serotype M18 (strain MGAS8232) protein is Putative zinc metalloprotease spyM18_2031.